The sequence spans 124 residues: Small ribosomal subunit protein uS12 (124 aa).

At Asp89 the chain carries 3-methylthioaspartic acid. Residues 104–124 (TAGVKDRRQSRSKYGAKAPKE) form a disordered region.

The protein belongs to the universal ribosomal protein uS12 family. As to quaternary structure, part of the 30S ribosomal subunit. Contacts proteins S8 and S17. May interact with IF1 in the 30S initiation complex.

With S4 and S5 plays an important role in translational accuracy. Functionally, interacts with and stabilizes bases of the 16S rRNA that are involved in tRNA selection in the A site and with the mRNA backbone. Located at the interface of the 30S and 50S subunits, it traverses the body of the 30S subunit contacting proteins on the other side and probably holding the rRNA structure together. The combined cluster of proteins S8, S12 and S17 appears to hold together the shoulder and platform of the 30S subunit. The protein is Small ribosomal subunit protein uS12 of Synechococcus sp. (strain CC9605).